An 880-amino-acid polypeptide reads, in one-letter code: DNA double-strand break repair Rad50 ATPase (880 aa).

ATP-binding positions include R12, 32–38, and Q138; that span reads NGSGKSS. Coiled coils occupy residues 225–336 and 391–744; these read GELE…VIKE and GEVI…QALN. The region spanning 397-494 is the Zinc-hook domain; the sequence is LESLEKERTE…NLRKLEIKLR (98 aa). The Zn(2+) site is built by C442 and C445. 789–794 is a binding site for ATP; that stretch reads FLSGGE.

It belongs to the SMC family. RAD50 subfamily. Homodimer. Forms a heterotetramer composed of two Mre11 subunits and two Rad50 subunits. Zn(2+) serves as cofactor.

Its function is as follows. Part of the Rad50/Mre11 complex, which is involved in the early steps of DNA double-strand break (DSB) repair. The complex may facilitate opening of the processed DNA ends to aid in the recruitment of HerA and NurA. Rad50 controls the balance between DNA end bridging and DNA resection via ATP-dependent structural rearrangements of the Rad50/Mre11 complex. This Pyrococcus abyssi (strain GE5 / Orsay) protein is DNA double-strand break repair Rad50 ATPase.